A 436-amino-acid polypeptide reads, in one-letter code: Putative permease MJ0326 (436 aa).

The next 12 membrane-spanning stretches (helical) occupy residues 24–44 (LAGITTFMTMAYIIFVNPQIL), 51–71 (FGAVMVATCIASAIATLVMGL), 79–99 (LAPGMGLNAYFTYGVCLGMGI), 103–123 (VALGAVFISGVLFIILTLTKI), 139–159 (TAVGIGLFIAFIGLKSAGIIV), 171–191 (LMEPSTLLALFGIFLTSILVS), 194–214 (VIGAILIGIIVTSLIGMILGI), 235–255 (LDIMGALNLGLLTIVLAFFFV), 322–342 (GFVSVVVAMLFLLSLFFYPVV), 345–365 (IPPYATAAALVIVGALMMRSV), 381–401 (ITLLTIPLTFSIATGLALGFI), and 416–436 (VHWLVYVLAVIFALRFVYLSG).

This sequence belongs to the nucleobase:cation symporter-2 (NCS2) (TC 2.A.40) family. Azg-like subfamily.

The protein localises to the cell membrane. The sequence is that of Putative permease MJ0326 from Methanocaldococcus jannaschii (strain ATCC 43067 / DSM 2661 / JAL-1 / JCM 10045 / NBRC 100440) (Methanococcus jannaschii).